The sequence spans 458 residues: N-acetylgalactosamine kinase (458 aa).

Positions 43, 49, 50, and 52 each coordinate alpha-D-galactose. Positions 143, 145, and 146 each coordinate ATP. Asp-190 lines the alpha-D-galactose pocket. The active-site Proton acceptor is Asp-190. Residues Asn-233 and Lys-234 each contribute to the ATP site.

This sequence belongs to the GHMP kinase family. GalK subfamily. As to quaternary structure, monomer.

The enzyme catalyses N-acetyl-alpha-D-galactosamine + ATP = N-acetyl-alpha-D-galactosamine 1-phosphate + ADP + H(+). Its function is as follows. Acts on GalNAc. Also acts as a galactokinase when galactose is present at high concentrations. May be involved in a salvage pathway for the reutilization of free GalNAc derived from the degradation of complex carbohydrates. This Homo sapiens (Human) protein is N-acetylgalactosamine kinase (GALK2).